The sequence spans 782 residues: Cysteine-rich protein 2-binding protein (782 aa).

Ser-4 carries the post-translational modification Phosphoserine. Residues 13–33 form a disordered region; that stretch reads RHDDEATRTSTSEGLEEGEVE. Lys-231 is modified (N6-acetyllysine). Residues 251–282 are disordered; sequence PVESAMELKEKRSRTQEAKDIRRAQKEAAGFL. A compositionally biased stretch (basic and acidic residues) spans 256 to 276; that stretch reads MELKEKRSRTQEAKDIRRAQK. The residue at position 285 (Ser-285) is a Phosphoserine. N6-acetyllysine is present on Lys-292. Residues 315-335 are compositionally biased toward low complexity; that stretch reads LSSSDRTPLTSPSPSPSLDFS. 2 disordered regions span residues 315-346 and 400-460; these read LSSS…HSAT and VRKK…EPRY. Basic and acidic residues-rich tracts occupy residues 405-426 and 446-459; these read RGPE…RMDI and KPQL…KEPR. Ser-416 is subject to Phosphoserine. The region spanning 638 to 782 is the N-acetyltransferase domain; it reads LDYCYVRPNH…KHAFFLRLRR (145 aa).

In terms of assembly, interacts with the LIM 1 domain of CSRP2. Component of the ADA2A-containing complex (ATAC), composed of CSRP2BP, KAT2A, TADA2L, TADA3L, ZZ3, MBIP, WDR5, YEATS2, CCDC101 and DR1. In the complex, it probably interacts directly with KAT2A, MBIP and WDR5. In terms of tissue distribution, expressed in skeletal muscle, heart, lung, placenta, brain, liver, pancreas and kidney. High expression in skeletal muscle and heart. Lower expression in lung.

The protein localises to the nucleus. Its subcellular location is the cytoplasm. Component of the ATAC complex, a complex with histone acetyltransferase activity on histones H3 and H4. May function as a scaffold for the ATAC complex to promote ATAC complex stability. Has also weak histone acetyltransferase activity toward histone H4. Required for the normal progression through G1 and G2/M phases of the cell cycle. The chain is Cysteine-rich protein 2-binding protein from Homo sapiens (Human).